A 143-amino-acid polypeptide reads, in one-letter code: D-aminoacyl-tRNA deacylase (143 aa).

A Gly-cisPro motif, important for rejection of L-amino acids motif is present at residues 135 to 136 (GP).

It belongs to the DTD family. Homodimer.

It localises to the cytoplasm. It carries out the reaction glycyl-tRNA(Ala) + H2O = tRNA(Ala) + glycine + H(+). The catalysed reaction is a D-aminoacyl-tRNA + H2O = a tRNA + a D-alpha-amino acid + H(+). An aminoacyl-tRNA editing enzyme that deacylates mischarged D-aminoacyl-tRNAs. Also deacylates mischarged glycyl-tRNA(Ala), protecting cells against glycine mischarging by AlaRS. Acts via tRNA-based rather than protein-based catalysis; rejects L-amino acids rather than detecting D-amino acids in the active site. By recycling D-aminoacyl-tRNA to D-amino acids and free tRNA molecules, this enzyme counteracts the toxicity associated with the formation of D-aminoacyl-tRNA entities in vivo and helps enforce protein L-homochirality. The protein is D-aminoacyl-tRNA deacylase of Mycobacterium marinum (strain ATCC BAA-535 / M).